A 163-amino-acid polypeptide reads, in one-letter code: uncharacterized protein (163 aa).

Positions 1-10 are enriched in basic and acidic residues; that stretch reads MTHPLPHDSH. 2 disordered regions span residues 1 to 21 and 71 to 112; these read MTHP…VNKS and SKQP…EQRR. The segment covering 90–105 has biased composition (polar residues); sequence PASSLQDHSRLTSLSR.

This is an uncharacterized protein from Homo sapiens (Human).